Reading from the N-terminus, the 363-residue chain is ADP-ribosylhydrolase ARH3 (363 aa).

Mg(2+) is bound at residue Glu41. The residue at position 64 (Thr64) is a Phosphothreonine. Mg(2+) is bound by residues Thr76, Asp77, and Asp78. A substrate-binding site is contributed by Asp77. Substrate contacts are provided by residues 146–152, His182, Leu235, and Ile271; that span reads KGSYGNG. Mg(2+)-binding residues include Asp314, Asp316, and Thr317.

Belongs to the ADP-ribosylglycohydrolase family. As to quaternary structure, monomer. The cofactor is Mg(2+). In terms of tissue distribution, ubiquitous. Expressed in skin fibroblasts.

The protein localises to the nucleus. It is found in the cytoplasm. The protein resides in the chromosome. It localises to the mitochondrion matrix. The catalysed reaction is [(1''-&gt;2')-ADP-alpha-D-ribose](n) + H2O = [(1''-&gt;2')-ADP-alpha-D-ribose](n-1) + ADP-D-ribose. It catalyses the reaction 1''-O-acetyl-ADP-alpha-D-ribose + H2O = ADP-D-ribose + acetate + H(+). It carries out the reaction O-(ADP-D-ribosyl)-L-seryl-[protein] + H2O = ADP-D-ribose + L-seryl-[protein]. The enzyme catalyses alpha-NAD(+) + H2O = ADP-D-ribose + nicotinamide + H(+). Its activity is regulated as follows. The protein undergoes a dramatic conformational switch from closed to open states upon substrate-binding, which enables specific substrate recognition for the 1''-O-linkage. The glutamate flap (Glu-41) blocks substrate entrance to Mg(2+) in the unliganded closed state. In presence of substrate, Glu-41 is ejected from the active site: this closed-to-open transition significantly widens the substrate-binding channel and precisely positions the scissile 1''-O-linkage for cleavage while securing tightly 2'- and 3'-hydroxyls of ADP-ribose. Functionally, ADP-ribosylhydrolase that preferentially hydrolyzes the scissile alpha-O-linkage attached to the anomeric C1'' position of ADP-ribose and acts on different substrates, such as proteins ADP-ribosylated on serine and threonine, free poly(ADP-ribose) and O-acetyl-ADP-D-ribose. Specifically acts as a serine mono-ADP-ribosylhydrolase by mediating the removal of mono-ADP-ribose attached to serine residues on proteins, thereby playing a key role in DNA damage response. Serine ADP-ribosylation of proteins constitutes the primary form of ADP-ribosylation of proteins in response to DNA damage. Does not hydrolyze ADP-ribosyl-arginine, -cysteine, -diphthamide, or -asparagine bonds. Also able to degrade protein free poly(ADP-ribose), which is synthesized in response to DNA damage: free poly(ADP-ribose) acts as a potent cell death signal and its degradation by ADPRHL2 protects cells from poly(ADP-ribose)-dependent cell death, a process named parthanatos. Also hydrolyzes free poly(ADP-ribose) in mitochondria. Specifically digests O-acetyl-ADP-D-ribose, a product of deacetylation reactions catalyzed by sirtuins. Specifically degrades 1''-O-acetyl-ADP-D-ribose isomer, rather than 2''-O-acetyl-ADP-D-ribose or 3''-O-acetyl-ADP-D-ribose isomers. This Homo sapiens (Human) protein is ADP-ribosylhydrolase ARH3.